The primary structure comprises 689 residues: Outer spore wall assembly protein SHE10 (689 aa).

The N-terminal stretch at 1-18 (MKILTKFFLLLVVTTCSL) is a signal peptide. The disordered stretch occupies residues 259–308 (TKAKSKSKPRVNASASARGNARAGAKAGAKAGTSEISASATADPTTSASA). Over residues 270 to 308 (NASASARGNARAGAKAGAKAGTSEISASATADPTTSASA) the composition is skewed to low complexity. Positions 406–435 (NKTKTVSEVLQNRYKNLNRAIQDINCTCET) form a coiled coil. Over residues 610 to 626 (EQESKQREDSPRMDRDS) the composition is skewed to basic and acidic residues. The segment at 610–689 (EQESKQREDS…TVQNNVTLQI (80 aa)) is disordered. 3 stretches are compositionally biased toward polar residues: residues 627–637 (TQNVENSNTTT), 655–670 (QNGT…GPDS), and 677–689 (METT…TLQI).

It belongs to the SHE10 family. Component of the mitochondria-localized RNase mitochondrial RNA-processing (RNase MRP) composed of one single RNA encoded by the NME1 gene and at least 31 proteins. Absent in the nucleus-localized RNase MRP (NuMRP).

It localises to the mitochondrion. In terms of biological role, involved in spore wall assembly. May be a component of the mitochondrial RNase MRP (MtMRP), a ribonucleoprotein endoribonuclease involved in the cleaving RNA transcripts to generate primers for DNA replication in mitochondria. This is Outer spore wall assembly protein SHE10 from Zygosaccharomyces rouxii (strain ATCC 2623 / CBS 732 / NBRC 1130 / NCYC 568 / NRRL Y-229).